The following is a 249-amino-acid chain: Small ribosomal subunit protein uS3 (249 aa).

In terms of domain architecture, KH type-2 spans 39–108 (IRQLINKKLA…TVAVNVAEIP (70 aa)). The tract at residues 214 to 249 (ETFARPQRRDRDERRPEGGDRPARRRPTARRRTGGE) is disordered. Over residues 220 to 235 (QRRDRDERRPEGGDRP) the composition is skewed to basic and acidic residues. Positions 236–249 (ARRRPTARRRTGGE) are enriched in basic residues.

Belongs to the universal ribosomal protein uS3 family. Part of the 30S ribosomal subunit. Forms a tight complex with proteins S10 and S14.

In terms of biological role, binds the lower part of the 30S subunit head. Binds mRNA in the 70S ribosome, positioning it for translation. This chain is Small ribosomal subunit protein uS3, found in Deinococcus radiodurans (strain ATCC 13939 / DSM 20539 / JCM 16871 / CCUG 27074 / LMG 4051 / NBRC 15346 / NCIMB 9279 / VKM B-1422 / R1).